The primary structure comprises 647 residues: Neutral endopeptidase (647 aa).

Positions Met1 to Trp647 constitute a Peptidase M13 domain. His496 is a Zn(2+) binding site. Glu497 is an active-site residue. Residues His500 and Glu556 each coordinate Zn(2+). The active-site Proton donor is the Asp560.

The protein belongs to the peptidase M13 family. Zn(2+) serves as cofactor.

The sequence is that of Neutral endopeptidase (pepO) from Lactobacillus helveticus (Lactobacillus suntoryeus).